Here is a 355-residue protein sequence, read N- to C-terminus: Neutral protease 2 homolog AFUB_100460 (355 aa).

The first 19 residues, 1 to 19 (MKITALASAILAVAQGALA), serve as a signal peptide directing secretion. Positions 20-172 (LPARAPALDI…PASIKPLDRR (153 aa)) are excised as a propeptide. 2 disulfides stabilise this stretch: cysteine 179–cysteine 251 and cysteine 258–cysteine 276. Histidine 300 contacts Zn(2+). The active site involves glutamate 301. Positions 304 and 315 each coordinate Zn(2+).

It belongs to the peptidase M35 family. It depends on Zn(2+) as a cofactor.

It is found in the secreted. It catalyses the reaction Preferential cleavage of bonds with hydrophobic residues in P1'. Also 3-Asn-|-Gln-4 and 8-Gly-|-Ser-9 bonds in insulin B chain.. Secreted metalloproteinase that allows assimilation of proteinaceous substrates. Shows high activities on basic nuclear substrates such as histone and protamine. May be involved in virulence. The chain is Neutral protease 2 homolog AFUB_100460 from Aspergillus fumigatus (strain CBS 144.89 / FGSC A1163 / CEA10) (Neosartorya fumigata).